Reading from the N-terminus, the 293-residue chain is Nucleotide-binding protein DvMF_0424 (293 aa).

13 to 20 (GLSGAGKS) is an ATP binding site. 65 to 68 (DLRE) contributes to the GTP binding site.

It belongs to the RapZ-like family.

In terms of biological role, displays ATPase and GTPase activities. This is Nucleotide-binding protein DvMF_0424 from Nitratidesulfovibrio vulgaris (strain DSM 19637 / Miyazaki F) (Desulfovibrio vulgaris).